A 341-amino-acid polypeptide reads, in one-letter code: UDP-3-O-acylglucosamine N-acyltransferase (341 aa).

His-237 (proton acceptor) is an active-site residue.

This sequence belongs to the transferase hexapeptide repeat family. LpxD subfamily. As to quaternary structure, homotrimer.

It catalyses the reaction a UDP-3-O-[(3R)-3-hydroxyacyl]-alpha-D-glucosamine + a (3R)-hydroxyacyl-[ACP] = a UDP-2-N,3-O-bis[(3R)-3-hydroxyacyl]-alpha-D-glucosamine + holo-[ACP] + H(+). Its pathway is bacterial outer membrane biogenesis; LPS lipid A biosynthesis. Functionally, catalyzes the N-acylation of UDP-3-O-acylglucosamine using 3-hydroxyacyl-ACP as the acyl donor. Is involved in the biosynthesis of lipid A, a phosphorylated glycolipid that anchors the lipopolysaccharide to the outer membrane of the cell. The protein is UDP-3-O-acylglucosamine N-acyltransferase of Azoarcus sp. (strain BH72).